A 335-amino-acid chain; its full sequence is Adenosine deaminase (335 aa).

2 residues coordinate Zn(2+): histidine 12 and histidine 14. Residues histidine 14 and aspartate 16 each contribute to the substrate site. Histidine 197 serves as a coordination point for Zn(2+). The Proton donor role is filled by glutamate 200. Aspartate 278 serves as a coordination point for Zn(2+).

The protein belongs to the metallo-dependent hydrolases superfamily. Adenosine and AMP deaminases family. Adenosine deaminase subfamily. Requires Zn(2+) as cofactor.

The enzyme catalyses adenosine + H2O + H(+) = inosine + NH4(+). The catalysed reaction is 2'-deoxyadenosine + H2O + H(+) = 2'-deoxyinosine + NH4(+). In terms of biological role, catalyzes the hydrolytic deamination of adenosine and 2-deoxyadenosine. In Clostridium botulinum (strain Kyoto / Type A2), this protein is Adenosine deaminase.